We begin with the raw amino-acid sequence, 662 residues long: uncharacterized protein (662 aa).

16 helical membrane passes run 10–30, 46–66, 68–88, 101–121, 167–187, 193–213, 217–237, 263–283, 285–305, 312–332, 342–362, 373–393, 394–414, 432–452, 460–480, and 485–505; these read SSIV…GWPV, PVIG…FLPI, AINL…LSKG, GFCW…EIIP, LIYY…TGAT, IALT…LAVA, SAYA…KPAV, PWVP…MAYL, ILYS…AILA, MWAG…LSVS, EVLI…AVLI, KVVE…LDIP, GFWL…FLIW, ALTV…SVIM, VLIP…STTI, and LVGR…ILVG.

It is found in the cell membrane. This is an uncharacterized protein from Sinorhizobium fredii (strain NBRC 101917 / NGR234).